The sequence spans 300 residues: CDAN1-interacting nuclease 1 (300 aa).

The protein localises to the nucleus. It localises to the cytoplasm. In terms of biological role, may play a role in erythroid cell differentiation. In Danio rerio (Zebrafish), this protein is CDAN1-interacting nuclease 1 (cdin1).